Here is a 110-residue protein sequence, read N- to C-terminus: UPF0102 protein HH_1751 (110 aa).

It belongs to the UPF0102 family.

This chain is UPF0102 protein HH_1751, found in Helicobacter hepaticus (strain ATCC 51449 / 3B1).